Here is an 806-residue protein sequence, read N- to C-terminus: MSENSSDSDSSCGWTVISHEGSDIEMLNSVTPTNSCEPAPECSSLEQEELQALQLEQGESSQNGTVLMEETAYPALEETSSTIEAEEEKIPEDNIYIGTASDDSDIVTLEPPKLEEIGNQEVVIVEEAQSSEDFNMGSSSSSQYTFCQPETVFSSQPSDDESSSDETSNQPSPAFRRRRARKKTVSTSESEDRLVAEQETEPSKESKRQFSSGLNKCVILALVIAVSMGFGHFYGTIQIQKRQQLVRKIHEDELNDMKDYLSQCQQEQGSFIDYKSLKENLARCWTLTEAEKMSFETQKTNLATENQYLRVSLEKEEKALSSLQEELNKLREQIRILEDKGTSTELVKENQKLKQHLEEEKQKKHSFLSQRETLLTEAKMLKRELERERLVTTALRGELQQLSGSQLHGKSDSPNVYTEKKEIAILRERLTELERKLTFEQQRSDLWERLYVEAKDQSGKQETDGKKKVGRGNHRAKNKSKETFLGSVKETFDAMKNSTKEFVRHHKEKIKQAKEAVKENLKKFSDSVKSTFRHFKDTTKNIFDEKGNKRFGATKAAAEKPRTVFSDYLHPQYKAPTENHHNRGPTMQNDGRKEKPVHFKEFRKNTNSRKCSPGHACRENSHSFRKACYGVFDCAQQESISLFNTVVNPIRMDEFRQIIQRYMLKELDTFCHWNELDRFINKFFLNGVFIHDQKLFTDFVNDVKDYLRNMKEYQVDNDGVFEKLDEYIYRHFFGHTFSPPYGPSRPDKKQRMVNIENSRHRKQEQKHLQPQPYKREGKWHKYGRTNGRQMANLEIELGQLPFDPQY.

The Cytoplasmic portion of the chain corresponds to 1–216 (MSENSSDSDS…KRQFSSGLNK (216 aa)). The interaction with MCF2L and SRC stretch occupies residues 1 to 307 (MSENSSDSDS…QKTNLATENQ (307 aa)). Disordered stretches follow at residues 80–105 (SSTI…DDSD) and 152–207 (VFSS…KESK). Basic residues predominate over residues 175 to 184 (FRRRRARKKT). Residue Ser-186 is modified to Phosphoserine. Over residues 190-207 (SEDRLVAEQETEPSKESK) the composition is skewed to basic and acidic residues. Residues 217-237 (CVILALVIAVSMGFGHFYGTI) form a helical; Signal-anchor for type II membrane protein membrane-spanning segment. Residues 238-806 (QIQKRQQLVR…LGQLPFDPQY (569 aa)) are Lumenal-facing. A coiled-coil region spans residues 305 to 449 (ENQYLRVSLE…EQQRSDLWER (145 aa)). The span at 457–467 (QSGKQETDGKK) shows a compositional bias: basic and acidic residues. Residues 457-478 (QSGKQETDGKKKVGRGNHRAKN) are disordered. A compositionally biased stretch (basic residues) spans 468–478 (KVGRGNHRAKN). The stretch at 503–529 (VRHHKEKIKQAKEAVKENLKKFSDSVK) forms a coiled coil. A disordered region spans residues 758-778 (SRHRKQEQKHLQPQPYKREGK).

Belongs to the CCPG1 family. In terms of assembly, interacts with MCF2L. May interact with MCF2, ARHGEF1, BCR, VAV1 and FGD1, but not with TIAM1. Interacts with GTP-bound CDC42 and SRC.

It localises to the cytoplasmic granule membrane. Acts as an assembly platform for Rho protein signaling complexes. Limits guanine nucleotide exchange activity of MCF2L toward RHOA, which results in an inhibition of both its transcriptional activation ability and its transforming activity. Does not inhibit activity of MCF2L toward CDC42, or activity of MCF2 toward either RHOA or CDC42. May be involved in cell cycle regulation. This Pongo abelii (Sumatran orangutan) protein is Cell cycle progression protein 1 (CCPG1).